Reading from the N-terminus, the 214-residue chain is Quinolone resistance pentapeptide repeat protein QnrB96 (214 aa).

Pentapeptide repeat domains lie at 23–103 and 116–189; these read STFH…SFMN and ITNT…VRGV.

The protein belongs to the pentapeptide repeat protein family.

Functionally, confers reduced sensitivity to the fluoroquinolone antibiotic ciprofloxacin (five-fold increase in minimum inhibitory concentration) when expressed in E.coli. The polypeptide is Quinolone resistance pentapeptide repeat protein QnrB96 (Scandinavium goeteborgense).